Here is a 662-residue protein sequence, read N- to C-terminus: UvrABC system protein B (662 aa).

One can recognise a Helicase ATP-binding domain in the interval aspartate 31–arginine 188. Glycine 44–threonine 51 serves as a coordination point for ATP. Positions tyrosine 97–valine 120 match the Beta-hairpin motif. Positions glutamine 435–isoleucine 601 constitute a Helicase C-terminal domain. A UVR domain is found at lysine 626 to leucine 661.

The protein belongs to the UvrB family. Forms a heterotetramer with UvrA during the search for lesions. Interacts with UvrC in an incision complex.

Its subcellular location is the cytoplasm. The UvrABC repair system catalyzes the recognition and processing of DNA lesions. A damage recognition complex composed of 2 UvrA and 2 UvrB subunits scans DNA for abnormalities. Upon binding of the UvrA(2)B(2) complex to a putative damaged site, the DNA wraps around one UvrB monomer. DNA wrap is dependent on ATP binding by UvrB and probably causes local melting of the DNA helix, facilitating insertion of UvrB beta-hairpin between the DNA strands. Then UvrB probes one DNA strand for the presence of a lesion. If a lesion is found the UvrA subunits dissociate and the UvrB-DNA preincision complex is formed. This complex is subsequently bound by UvrC and the second UvrB is released. If no lesion is found, the DNA wraps around the other UvrB subunit that will check the other stand for damage. This chain is UvrABC system protein B, found in Streptococcus pneumoniae serotype 2 (strain D39 / NCTC 7466).